A 434-amino-acid polypeptide reads, in one-letter code: Isocitrate lyase (434 aa).

Substrate is bound at residue 91 to 93 (SGW). Asp-157 lines the Mg(2+) pocket. Cys-195 acts as the Proton acceptor in catalysis. Residues 196–197 (GH), Arg-232, 317–321 (NCSPS), and Thr-351 contribute to the substrate site.

This sequence belongs to the isocitrate lyase/PEP mutase superfamily. Isocitrate lyase family. Homotetramer. Mg(2+) is required as a cofactor.

It catalyses the reaction D-threo-isocitrate = glyoxylate + succinate. It participates in carbohydrate metabolism; glyoxylate cycle; (S)-malate from isocitrate: step 1/2. Its function is as follows. Involved in the metabolic adaptation in response to environmental changes. Catalyzes the reversible formation of succinate and glyoxylate from isocitrate, a key step of the glyoxylate cycle, which operates as an anaplerotic route for replenishing the tricarboxylic acid cycle during growth on fatty acid substrates. The sequence is that of Isocitrate lyase (aceA) from Salmonella typhimurium (strain LT2 / SGSC1412 / ATCC 700720).